The sequence spans 611 residues: Glutamine--fructose-6-phosphate aminotransferase [isomerizing] (611 aa).

The Nucleophile; for GATase activity role is filled by cysteine 2. Residues 2–219 (CGIVGAVAER…EGDIAEIRRD (218 aa)) form the Glutamine amidotransferase type-2 domain. 2 consecutive SIS domains span residues 287-427 (AADL…VRGT) and 460-601 (IAEL…VDQP). The For Fru-6P isomerization activity role is filled by lysine 606.

In terms of assembly, homodimer.

Its subcellular location is the cytoplasm. The catalysed reaction is D-fructose 6-phosphate + L-glutamine = D-glucosamine 6-phosphate + L-glutamate. Functionally, catalyzes the first step in hexosamine metabolism, converting fructose-6P into glucosamine-6P using glutamine as a nitrogen source. This is Glutamine--fructose-6-phosphate aminotransferase [isomerizing] from Pseudomonas putida (strain ATCC 47054 / DSM 6125 / CFBP 8728 / NCIMB 11950 / KT2440).